Consider the following 144-residue polypeptide: MMDLSPNNQIEDRKPILTADGLVQTSNSPFEPTISQETQTSNGIGGQCHLTVDQLDIEILPIIYDIVRCVEKDPLENAVKLRESQDCNHKIFELQKRFESAREQIRQLPGIDFNKEEQQQRLELLRNQLKLKQQLIRKYKDTEF.

Residues 85–143 (QDCNHKIFELQKRFESAREQIRQLPGIDFNKEEQQQRLELLRNQLKLKQQLIRKYKDTE) are a coiled coil.

The protein belongs to the Mediator complex subunit 9 family. Component of the Mediator complex.

Its subcellular location is the nucleus. Functionally, component of the Mediator complex, a coactivator involved in the regulated transcription of nearly all RNA polymerase II-dependent genes. Mediator functions as a bridge to convey information from gene-specific regulatory proteins to the basal RNA polymerase II transcription machinery. Mediator is recruited to promoters by direct interactions with regulatory proteins and serves as a scaffold for the assembly of a functional preinitiation complex with RNA polymerase II and the general transcription factors. This chain is Mediator of RNA polymerase II transcription subunit 9 (MED9), found in Drosophila melanogaster (Fruit fly).